The primary structure comprises 227 residues: 2,3-bisphosphoglycerate-dependent phosphoglycerate mutase (227 aa).

Residues 8–15 (RHGKSVWN), 21–22 (TG), Arg58, 110–113 (ERMY), Lys121, 137–138 (RR), and 181–182 (GN) contribute to the substrate site. His9 functions as the Tele-phosphohistidine intermediate in the catalytic mechanism. Glu110 functions as the Proton donor/acceptor in the catalytic mechanism.

It belongs to the phosphoglycerate mutase family. BPG-dependent PGAM subfamily.

The catalysed reaction is (2R)-2-phosphoglycerate = (2R)-3-phosphoglycerate. The protein operates within carbohydrate degradation; glycolysis; pyruvate from D-glyceraldehyde 3-phosphate: step 3/5. Functionally, catalyzes the interconversion of 2-phosphoglycerate and 3-phosphoglycerate. This is 2,3-bisphosphoglycerate-dependent phosphoglycerate mutase from Chlamydia abortus (strain DSM 27085 / S26/3) (Chlamydophila abortus).